The primary structure comprises 573 residues: Proline--tRNA ligase (573 aa).

This sequence belongs to the class-II aminoacyl-tRNA synthetase family. ProS type 1 subfamily. As to quaternary structure, homodimer.

The protein localises to the cytoplasm. The enzyme catalyses tRNA(Pro) + L-proline + ATP = L-prolyl-tRNA(Pro) + AMP + diphosphate. Catalyzes the attachment of proline to tRNA(Pro) in a two-step reaction: proline is first activated by ATP to form Pro-AMP and then transferred to the acceptor end of tRNA(Pro). As ProRS can inadvertently accommodate and process non-cognate amino acids such as alanine and cysteine, to avoid such errors it has two additional distinct editing activities against alanine. One activity is designated as 'pretransfer' editing and involves the tRNA(Pro)-independent hydrolysis of activated Ala-AMP. The other activity is designated 'posttransfer' editing and involves deacylation of mischarged Ala-tRNA(Pro). The misacylated Cys-tRNA(Pro) is not edited by ProRS. The chain is Proline--tRNA ligase from Methylobacillus flagellatus (strain ATCC 51484 / DSM 6875 / VKM B-1610 / KT).